Reading from the N-terminus, the 89-residue chain is Barrier-to-autointegration factor (89 aa).

At Met1 the chain carries N-acetylmethionine. Residue Thr2 is modified to N-acetylthreonine; in Barrier-to-autointegration factor, N-terminally processed. Thr2 and Thr3 each carry phosphothreonine; by VRK1 and VRK2. Ser4 bears the Phosphoserine; by VRK1 and VRK2 mark. Residues 20 to 35 form the HhH domain; that stretch reads VGSLAGIGEVLGKKLE.

Belongs to the BAF family. Homodimer. Heterodimerizes with BANF2. Interacts with ANKLE2/LEM4, leading to decreased phosphorylation by VRK1 and promoting dephosphorylation by protein phosphatase 2A (PP2A). Binds non-specifically to double-stranded DNA, and is found as a hexamer or dodecamer upon DNA binding. Binds to LEM domain-containing nuclear proteins such as LEMD3/MAN1, TMPO/LAP2 and EMD (emerin). Interacts with ANKLE1 (via LEM domain); the interaction may favor BANF1 dimerization. Interacts with CRX and LMNA (lamin-A). Binds linker histone H1.1 and core histones H3. Interacts with LEMD2 (via LEM domain). Interacts with PARP1; interaction takes place in response to oxidative DNA damage. Ser-4 is the major site of phosphorylation as compared to Thr-2 and Thr-3. Phosphorylation on Thr-2; Thr-3 and Ser-4 disrupts its ability to bind DNA and reduces its ability to bind LEM domain-containing proteins. Non phosphorylated BAF seems to enhance binding between EMD and LMNA. Dephosphorylated by protein phosphatase 2A (PP2A) following interaction with ANKLE2/LEM4 during mitotic exit, leading to mitotic nuclear envelope reassembly.

It is found in the nucleus. Its subcellular location is the chromosome. It localises to the nucleus envelope. The protein localises to the cytoplasm. Non-specific DNA-binding protein that plays key roles in mitotic nuclear reassembly, chromatin organization, DNA damage response, gene expression and intrinsic immunity against foreign DNA. Contains two non-specific double-stranded DNA (dsDNA)-binding sites which promote DNA cross-bridging. Plays a key role in nuclear membrane reformation at the end of mitosis by driving formation of a single nucleus in a spindle-independent manner. Transiently cross-bridges anaphase chromosomes via its ability to bridge distant DNA sites, leading to the formation of a dense chromatin network at the chromosome ensemble surface that limits membranes to the surface. Also acts as a negative regulator of innate immune activation by restricting CGAS activity toward self-DNA upon acute loss of nuclear membrane integrity. Outcompetes CGAS for DNA-binding, thereby preventing CGAS activation and subsequent damaging autoinflammatory responses. Also involved in DNA damage response: interacts with PARP1 in response to oxidative stress, thereby inhibiting the ADP-ribosyltransferase activity of PARP1. Involved in the recognition of exogenous dsDNA in the cytosol: associates with exogenous dsDNA immediately after its appearance in the cytosol at endosome breakdown and is required to avoid autophagy. In case of poxvirus infection, has an antiviral activity by blocking viral DNA replication. This Bos taurus (Bovine) protein is Barrier-to-autointegration factor (BANF1).